The sequence spans 310 residues: Transcriptional activator BRRF1 (310 aa).

Belongs to the lymphocryptovirus BBRF1 family.

Functionally, enhances the ability of BRLF1 to induce lytic infection by cooperating with it to transcriptionally activate the BZLF1 promoter. The sequence is that of Transcriptional activator BRRF1 from Epstein-Barr virus (strain AG876) (HHV-4).